The chain runs to 87 residues: Translation initiation factor IF-1 2 (87 aa).

The 72-residue stretch at 1–72 folds into the S1-like domain; the sequence is MAKEELIELN…TKGRINFRHK (72 aa). The tract at residues 66 to 87 is disordered; the sequence is RINFRHKDERSGPPSRPPQHRR.

This sequence belongs to the IF-1 family. As to quaternary structure, component of the 30S ribosomal translation pre-initiation complex which assembles on the 30S ribosome in the order IF-2 and IF-3, IF-1 and N-formylmethionyl-tRNA(fMet); mRNA recruitment can occur at any time during PIC assembly.

The protein localises to the cytoplasm. Its function is as follows. One of the essential components for the initiation of protein synthesis. Stabilizes the binding of IF-2 and IF-3 on the 30S subunit to which N-formylmethionyl-tRNA(fMet) subsequently binds. Helps modulate mRNA selection, yielding the 30S pre-initiation complex (PIC). Upon addition of the 50S ribosomal subunit IF-1, IF-2 and IF-3 are released leaving the mature 70S translation initiation complex. The protein is Translation initiation factor IF-1 2 of Bordetella parapertussis (strain 12822 / ATCC BAA-587 / NCTC 13253).